Here is a 362-residue protein sequence, read N- to C-terminus: Probable dual-specificity RNA methyltransferase RlmN (362 aa).

The active-site Proton acceptor is glutamate 105. The region spanning 111 to 344 (HEYGNSICVT…VTIRREQGHD (234 aa)) is the Radical SAM core domain. A disulfide bond links cysteine 118 and cysteine 349. [4Fe-4S] cluster-binding residues include cysteine 125, cysteine 129, and cysteine 132. Residues 175-176 (GE), serine 207, 230-232 (SLH), and asparagine 306 each bind S-adenosyl-L-methionine. Cysteine 349 functions as the S-methylcysteine intermediate in the catalytic mechanism.

This sequence belongs to the radical SAM superfamily. RlmN family. [4Fe-4S] cluster is required as a cofactor.

Its subcellular location is the cytoplasm. The enzyme catalyses adenosine(2503) in 23S rRNA + 2 reduced [2Fe-2S]-[ferredoxin] + 2 S-adenosyl-L-methionine = 2-methyladenosine(2503) in 23S rRNA + 5'-deoxyadenosine + L-methionine + 2 oxidized [2Fe-2S]-[ferredoxin] + S-adenosyl-L-homocysteine. The catalysed reaction is adenosine(37) in tRNA + 2 reduced [2Fe-2S]-[ferredoxin] + 2 S-adenosyl-L-methionine = 2-methyladenosine(37) in tRNA + 5'-deoxyadenosine + L-methionine + 2 oxidized [2Fe-2S]-[ferredoxin] + S-adenosyl-L-homocysteine. Specifically methylates position 2 of adenine 2503 in 23S rRNA and position 2 of adenine 37 in tRNAs. This is Probable dual-specificity RNA methyltransferase RlmN from Bacillus anthracis (strain CDC 684 / NRRL 3495).